We begin with the raw amino-acid sequence, 89 residues long: Small ribosomal subunit protein uS17 (89 aa).

Belongs to the universal ribosomal protein uS17 family. As to quaternary structure, part of the 30S ribosomal subunit.

Its function is as follows. One of the primary rRNA binding proteins, it binds specifically to the 5'-end of 16S ribosomal RNA. The polypeptide is Small ribosomal subunit protein uS17 (Azoarcus sp. (strain BH72)).